The sequence spans 485 residues: E-selectin (485 aa).

The first 22 residues, 1–22 (MIVSQYLSALTFVLLLFKESRT), serve as a signal peptide directing secretion. The 118-residue stretch at 23 to 140 (WSYHASTEMM…CTKQKLALCY (118 aa)) folds into the C-type lectin domain. Topologically, residues 23 to 430 (WSYHASTEMM…CEAPTVSQTP (408 aa)) are extracellular. 15 disulfide bridges follow: Cys41-Cys139, Cys112-Cys131, Cys144-Cys155, Cys149-Cys164, Cys166-Cys175, Cys181-Cys224, Cys194-Cys206, Cys210-Cys237, Cys242-Cys286, Cys255-Cys268, Cys272-Cys299, Cys304-Cys349, Cys335-Cys362, Cys367-Cys408, and Cys394-Cys421. 3 N-linked (GlcNAc...) asparagine glycosylation sites follow: Asn61, Asn79, and Asn88. Glu102, Asn104, and Glu110 together coordinate Ca(2+). A carbohydrate is bound by residues 102 to 110 (EPNNKQSDE), 114 to 119 (EIYIKR), and 127 to 129 (NDE). 2 residues coordinate Ca(2+): Asn127 and Asp128. In terms of domain architecture, EGF-like spans 141–176 (KAACNPTPCGSHGECVETINNYTCQCHPGFKGLKCE). An N-linked (GlcNAc...) asparagine glycan is attached at Asn161. 4 Sushi domains span residues 179–239 (VTCP…KCNV), 240–301 (VKCD…TCKA), 302–364 (VSCA…VCEV), and 365–423 (VRCS…TCEA). Asn203 is a glycosylation site (N-linked (GlcNAc...) asparagine). An N-linked (GlcNAc...) asparagine glycan is attached at Asn265. 2 N-linked (GlcNAc...) asparagine glycosylation sites follow: Asn312 and Asn316. Residues Asn379 and Asn401 are each glycosylated (N-linked (GlcNAc...) asparagine). A helical transmembrane segment spans residues 431 to 453 (LAVGLSTAGVSLVTIPSFLFWLL). Residues 454 to 485 (KRLQKKAKKFSPASSCSSLKSNGCYSTPSKLI) are Cytoplasmic-facing. Residues 466-485 (ASSCSSLKSNGCYSTPSKLI) are disordered.

It belongs to the selectin/LECAM family. Interacts with SELPLG/PSGL1 and PODXL2 through the sialyl Lewis X epitope. SELPLG sulfation appears not to be required for this interaction.

It localises to the cell membrane. Functionally, cell-surface glycoprotein having a role in immunoadhesion. Mediates in the adhesion of blood neutrophils in cytokine-activated endothelium through interaction with SELPLG/PSGL1. May have a role in capillary morphogenesis. The polypeptide is E-selectin (SELE) (Bos taurus (Bovine)).